A 386-amino-acid polypeptide reads, in one-letter code: Succinate--CoA ligase [ADP-forming] subunit beta (386 aa).

In terms of domain architecture, ATP-grasp spans 9–244; it reads KAVLRSYGVS…LDEEDAKEIE (236 aa). Residues K46, 53-55, E99, C102, and E107 each bind ATP; that span reads GRG. Mg(2+) is bound by residues N199 and D213. Residues N264 and 321 to 323 contribute to the substrate site; that span reads GIM.

It belongs to the succinate/malate CoA ligase beta subunit family. Heterotetramer of two alpha and two beta subunits. Mg(2+) is required as a cofactor.

The enzyme catalyses succinate + ATP + CoA = succinyl-CoA + ADP + phosphate. It catalyses the reaction GTP + succinate + CoA = succinyl-CoA + GDP + phosphate. It functions in the pathway carbohydrate metabolism; tricarboxylic acid cycle; succinate from succinyl-CoA (ligase route): step 1/1. Functionally, succinyl-CoA synthetase functions in the citric acid cycle (TCA), coupling the hydrolysis of succinyl-CoA to the synthesis of either ATP or GTP and thus represents the only step of substrate-level phosphorylation in the TCA. The beta subunit provides nucleotide specificity of the enzyme and binds the substrate succinate, while the binding sites for coenzyme A and phosphate are found in the alpha subunit. This Bacillus anthracis (strain A0248) protein is Succinate--CoA ligase [ADP-forming] subunit beta.